The chain runs to 241 residues: uncharacterized protein (241 aa).

S-adenosyl-L-methionine is bound by residues 78–80 (TSA), Gly-111, Ile-131, and 138–140 (SSL).

Belongs to the class IV-like SAM-binding methyltransferase superfamily. RNA methyltransferase TrmH family.

This is an uncharacterized protein from Haemophilus influenzae (strain ATCC 51907 / DSM 11121 / KW20 / Rd).